We begin with the raw amino-acid sequence, 159 residues long: Transcriptional repressor NrdR (159 aa).

A zinc finger spans residues 3-34; sequence CPFCRHDDTQVVDSRVSEDGAAIRRRRRCSAC. An ATP-cone domain is found at 49 to 139; that stretch reads PAVVKKDGSR…VYRRFEDVSE (91 aa).

It belongs to the NrdR family. It depends on Zn(2+) as a cofactor.

In terms of biological role, negatively regulates transcription of bacterial ribonucleotide reductase nrd genes and operons by binding to NrdR-boxes. The chain is Transcriptional repressor NrdR from Burkholderia cenocepacia (strain HI2424).